The following is a 637-amino-acid chain: Palmitoyltransferase Hip14 (637 aa).

Over 1 to 295 (MYQSACQAAT…SKLRHDKRLR (295 aa)) the chain is Cytoplasmic. ANK repeat units follow at residues 77–106 (ETVTLLHWAAINNRRDIIRYFLEKGATVDA), 111–140 (LNATPLHWATRQGHLGAVVLLMAAGADPRI), 144–173 (EGCSCIHIAAQFAHTALVAYFIAKGVDPDL), 177–207 (GGMTALMWAAWKVCALDPVRLLLTLGANPAM), and 212–242 (HGNTALHWAILARNATAISTLVLKSKASLDV). A helical membrane pass occupies residues 296–315 (WWSMVACPFTAFYLAGIVFT). Residues 316–318 (VNT) are Lumenal-facing. A helical membrane pass occupies residues 319–341 (LYIIKFFLLGCLYSIFHTIGKAL). Over 342 to 345 (FDEH) the chain is Cytoplasmic. Residues 346–366 (LMALLPLSVYLATKAWFYVTW) form a helical membrane-spanning segment. Topologically, residues 367–373 (LMYIDDA) are lumenal. The chain crosses the membrane as a helical span at residues 374-394 (VSFTATVCFLISSLLLWVCFL). Over 395-472 (KSWKGDPGII…VGNCIGLKNH (78 aa)) the chain is Cytoplasmic. Positions 430 to 480 (SFCSGCLVRRPIRSKHCSVCDRCVARFDHHCPWVGNCIGLKNHSYFMGFLW) constitute a DHHC domain. Catalysis depends on C460, which acts as the S-palmitoyl cysteine intermediate. Residues 473–493 (SYFMGFLWMLLIMCAWMLYGG) form a helical membrane-spanning segment. The Lumenal segment spans residues 494 to 520 (SKYYVNQCNVRFDDFLGAMRAIGNCDA). A helical membrane pass occupies residues 521–541 (WVGWVMGNALLHMSWVILLTI). The Cytoplasmic portion of the chain corresponds to 542–637 (CQTYQVICLG…DGMAGDHQYV (96 aa)).

The protein belongs to the DHHC palmitoyltransferase family. AKR/ZDHHC17 subfamily. In terms of assembly, interacts with dorsal-ventral patterning protein Sog. In terms of tissue distribution, in stage 13-15 embryos, expressed in the central nervous system. At the third instar larval stage, expressed in the ventral nerve cord and is enriched in the neuropil.

It is found in the golgi apparatus membrane. The protein resides in the presynaptic cell membrane. It catalyses the reaction L-cysteinyl-[protein] + hexadecanoyl-CoA = S-hexadecanoyl-L-cysteinyl-[protein] + CoA. In terms of biological role, probable palmitoyltransferase which is required for photoreceptor synaptic transmission and for the correct expression and localization of palmitoylated protein Csp and synaptosomal-associated protein Snap25. Probably palmitoylates Csp. Probably also palmitoylates the dorsal-ventral patterning protein Sog and promotes its secretion and activity and the stabilization of the membrane-bound form. Required for synaptic vesicle exocytosis. This Drosophila melanogaster (Fruit fly) protein is Palmitoyltransferase Hip14.